Consider the following 475-residue polypeptide: UDP-N-acetylmuramate--L-alanine ligase (475 aa).

114–120 (GTHGKTT) serves as a coordination point for ATP.

Belongs to the MurCDEF family.

The protein resides in the cytoplasm. The catalysed reaction is UDP-N-acetyl-alpha-D-muramate + L-alanine + ATP = UDP-N-acetyl-alpha-D-muramoyl-L-alanine + ADP + phosphate + H(+). The protein operates within cell wall biogenesis; peptidoglycan biosynthesis. Functionally, cell wall formation. The chain is UDP-N-acetylmuramate--L-alanine ligase from Bartonella quintana (strain Toulouse) (Rochalimaea quintana).